Reading from the N-terminus, the 80-residue chain is Acyl carrier protein (80 aa).

A Carrier domain is found at 4 to 79 (QEIFEKVKAV…DAVEYIKAKL (76 aa)). Ser39 carries the post-translational modification O-(pantetheine 4'-phosphoryl)serine.

It belongs to the acyl carrier protein (ACP) family. Post-translationally, 4'-phosphopantetheine is transferred from CoA to a specific serine of apo-ACP by AcpS. This modification is essential for activity because fatty acids are bound in thioester linkage to the sulfhydryl of the prosthetic group.

It localises to the cytoplasm. The protein operates within lipid metabolism; fatty acid biosynthesis. Its function is as follows. Carrier of the growing fatty acid chain in fatty acid biosynthesis. This is Acyl carrier protein from Thermus thermophilus (strain ATCC BAA-163 / DSM 7039 / HB27).